Consider the following 231-residue polypeptide: MKTLEKKLAEDFKIVFSDKELLETAFTHTSYANEHRLLNISHNERLEFLGDAVLQLTISHYLFDKYPQKAEGDLSKMRSMIVREESLAGFSRNCHFDRYIKLGKGEEKSGGRQRDTILGDLFEAFLGALLLDAGLKAVEAFLNQVVIPKVENNNYERVTDYKTALQELLQVDGDVLIDYEVLKESGPAHAKCFEVAVSMNHEKLSSGTGKSKKLAEQEAAKNALEKLQRGS.

The RNase III domain occupies 1–134; the sequence is MKTLEKKLAE…FLGALLLDAG (134 aa). A Mg(2+)-binding site is contributed by Glu47. Asp51 is an active-site residue. Mg(2+) contacts are provided by Asp120 and Glu123. Residue Glu123 is part of the active site. Residues 160–229 enclose the DRBM domain; that stretch reads DYKTALQELL…AKNALEKLQR (70 aa).

Belongs to the ribonuclease III family. In terms of assembly, homodimer. The cofactor is Mg(2+).

The protein resides in the cytoplasm. It catalyses the reaction Endonucleolytic cleavage to 5'-phosphomonoester.. Its function is as follows. Digests double-stranded RNA. Involved in the processing of primary rRNA transcript to yield the immediate precursors to the large and small rRNAs (23S and 16S). Also processes some mRNAs, and tRNAs when they are encoded in the rRNA operon. CRISPR (clustered regularly interspaced short palindromic repeat) is an adaptive immune system that provides protection against mobile genetic elements (viruses, transposable elements and conjugative plasmids). CRISPR clusters contain spacers, sequences complementary to antecedent mobile elements, and target invading nucleic acids. CRISPR clusters are transcribed and processed into CRISPR RNA (crRNA). In this organism endogenous ribonuclease 3 and Cas9 are required for correct coprocessing of pre-crRNA and the trans-encoded small RNA (tracrRNA). Cas9, crRNA and tracrRNA are required for cleavage of invading DNA. Complements pre-crRNA and tracrRNA coprocessing defects in an rnc deletion in S.pyogenes strain 370. This Streptococcus mutans serotype c (strain ATCC 700610 / UA159) protein is Ribonuclease 3.